The sequence spans 521 residues: MAASIGALKSSPSSHNCINERRNDSTRAISSRNLSFSSSHLAGDKLMPVSSLRSQGVRFNVRRSPLIVSPKAVSDSQNSQTCLDPDASRSVLGIILGGGAGTRLYPLTKKRAKPAVPLGANYRLIDIPVSNCLNSNISKIYVLTQFNSASLNRHLSRAYASNMGEYKNEGFVEVLAAQQSPENPDWFQGTADAVRQYLWLFEEHNVLEYLILAGDHLYRMDYEKFIQAHRETDADITVAALPMDEKRATAFGLMKIDEEGRIIEFAEKPQGEQLQAMKVDTTILGLDDKRAKEMPFIASMGIYVISKDVMLNLLRDKFPGANDFGSEVIPGATSLGMRVQAYLYDGYWEDIGTIEAFYNANLGITKKPVPDFSFYDRSAPIYTQPRYLPPSKMLDADVTDSVIGEGCVIKNCKIHHSVVGLRSCISEGAIIEDSLLMGADYYETDAERKLLAAKGSVPIGIGKNCLYKRAIIDKNARIGDNVKIINKDNVQEAARETDGYFIKSGIVTVIKDALIPSGIVI.

Residues 1 to 24 (MAASIGALKSSPSSHNCINERRND) are disordered. The N-terminal 72 residues, 1-72 (MAASIGALKS…RSPLIVSPKA (72 aa)), are a transit peptide targeting the chloroplast.

This sequence belongs to the bacterial/plant glucose-1-phosphate adenylyltransferase family. As to quaternary structure, heterotetramer.

It localises to the plastid. The protein localises to the chloroplast. The enzyme catalyses alpha-D-glucose 1-phosphate + ATP + H(+) = ADP-alpha-D-glucose + diphosphate. It functions in the pathway glycan biosynthesis; starch biosynthesis. Activated by 3'phosphoglycerate, inhibited by orthophosphate. Allosteric regulation. This protein plays a role in synthesis of starch. It catalyzes the synthesis of the activated glycosyl donor, ADP-glucose from Glc-1-P and ATP. In Solanum lycopersicum (Tomato), this protein is Glucose-1-phosphate adenylyltransferase small subunit, chloroplastic.